A 191-amino-acid polypeptide reads, in one-letter code: Thioredoxin F-type, chloroplastic (191 aa).

A Thioredoxin domain is found at 68–190; sequence KASLETAVGA…LVAAIEAARS (123 aa). Active-site nucleophile residues include Cys115 and Cys118. Cys115 and Cys118 are disulfide-bonded.

Belongs to the thioredoxin family. Plant F-type subfamily. As to quaternary structure, forms a complex with heterodimeric ferredoxin-thioredoxin reductase (FTR) and ferredoxin.

Its subcellular location is the plastid. The protein localises to the chloroplast. In terms of biological role, participates in various redox reactions through the reversible oxidation of the active center dithiol to a disulfide. The F form is known to activate a number of enzymes of the photosynthetic carbon cycle. This chain is Thioredoxin F-type, chloroplastic, found in Mesembryanthemum crystallinum (Common ice plant).